A 406-amino-acid polypeptide reads, in one-letter code: Argininosuccinate synthase (406 aa).

ATP-binding positions include Ala-11 to Ser-19 and Ala-38. L-citrulline-binding residues include Tyr-91 and Ser-96. Gly-121 contributes to the ATP binding site. Thr-123, Asn-127, and Asp-128 together coordinate L-aspartate. Asn-127 contributes to the L-citrulline binding site. L-citrulline-binding residues include Arg-131, Ser-181, Ser-190, Glu-266, and Tyr-278.

Belongs to the argininosuccinate synthase family. Type 1 subfamily. As to quaternary structure, homotetramer.

It is found in the cytoplasm. It catalyses the reaction L-citrulline + L-aspartate + ATP = 2-(N(omega)-L-arginino)succinate + AMP + diphosphate + H(+). The protein operates within amino-acid biosynthesis; L-arginine biosynthesis; L-arginine from L-ornithine and carbamoyl phosphate: step 2/3. This chain is Argininosuccinate synthase, found in Campylobacter jejuni subsp. jejuni serotype O:6 (strain 81116 / NCTC 11828).